Reading from the N-terminus, the 333-residue chain is Protein-methionine-sulfoxide reductase catalytic subunit MsrP (333 aa).

Residues 1-43 (MHKHRKPTEADVTPESLFYQRRRILKALGISAAALSLPFSAQA) constitute a signal peptide (tat-type signal). Mo-molybdopterin is bound by residues N87, 90–91 (YE), C145, T180, N232, R237, and 248–250 (NIK).

It belongs to the MsrP family. Heterodimer of a catalytic subunit (MsrP) and a heme-binding subunit (MsrQ). The cofactor is Mo-molybdopterin. In terms of processing, predicted to be exported by the Tat system. The position of the signal peptide cleavage has not been experimentally proven.

The protein resides in the periplasm. The catalysed reaction is L-methionyl-[protein] + a quinone + H2O = L-methionyl-(S)-S-oxide-[protein] + a quinol. It carries out the reaction L-methionyl-[protein] + a quinone + H2O = L-methionyl-(R)-S-oxide-[protein] + a quinol. Functionally, part of the MsrPQ system that repairs oxidized periplasmic proteins containing methionine sulfoxide residues (Met-O), using respiratory chain electrons. Thus protects these proteins from oxidative-stress damage caused by reactive species of oxygen and chlorine generated by the host defense mechanisms. MsrPQ is essential for the maintenance of envelope integrity under bleach stress, rescuing a wide series of structurally unrelated periplasmic proteins from methionine oxidation. The catalytic subunit MsrP is non-stereospecific, being able to reduce both (R-) and (S-) diastereoisomers of methionine sulfoxide. This is Protein-methionine-sulfoxide reductase catalytic subunit MsrP from Pectobacterium carotovorum subsp. carotovorum (strain PC1).